A 1036-amino-acid chain; its full sequence is Protein smoothened (1036 aa).

The N-terminal stretch at 1 to 31 (MQYLNFPRMPNIMMFLEVAILCLWVVADASA) is a signal peptide. At 32–258 (SSAKFGSTTP…DDEHRQIHKL (227 aa)) the chain is on the extracellular side. Residues asparagine 55 and asparagine 95 are each glycosylated (N-linked (GlcNAc...) asparagine). Residues 85 to 206 (VRRARCYPTS…TLFPTKCTNG (122 aa)) form the FZ domain. Disulfide bonds link cysteine 90–cysteine 155, cysteine 100–cysteine 148, cysteine 139–cysteine 179, and cysteine 172–cysteine 194. N-linked (GlcNAc...) asparagine glycosylation is found at asparagine 184, asparagine 195, and asparagine 213. Intrachain disulfides connect cysteine 218-cysteine 238 and cysteine 242-cysteine 320. The helical transmembrane segment at 259-279 (IGWAGSICLLSNLFVVSTFFI) threads the bilayer. Residues 280–287 (DWKNANKY) are Cytoplasmic-facing. A helical transmembrane segment spans residues 288–308 (PAVIVFYINLCFLIACVGWLL). Residues 309–339 (QFTSGSREDIVCRKDGTLRHSEPTAGENLSC) are Extracellular-facing. Residue asparagine 336 is glycosylated (N-linked (GlcNAc...) asparagine). Cysteines 339 and 413 form a disulfide. Residues 340–360 (IVIFVLVYYFLTAGMVWFVFL) form a helical membrane-spanning segment. The Cytoplasmic segment spans residues 361–381 (TYAWHWRAMGHVQDRIDKKGS). The chain crosses the membrane as a helical span at residues 382–402 (YFHLVAWSLPLVLTITTMAFS). Over 403–421 (EVDGNSIVGICFVGYINHS) the chain is Extracellular. Asparagine 419 is a glycosylation site (N-linked (GlcNAc...) asparagine). A helical membrane pass occupies residues 422–442 (MRAGLLLGPLCGVILIGGYFI). Over 443-469 (TRGMVMLFGLKHFANDIKSTSASNKIH) the chain is Cytoplasmic. Residues 470–490 (LIIMRMGVCALLTLVFILVAI) form a helical membrane-spanning segment. The Extracellular segment spans residues 491 to 532 (ACHVTEFRHADEWAQSFRQFIICKISSVFEEKSSCRIENRPS). The cysteines at positions 513 and 525 are disulfide-linked. A helical transmembrane segment spans residues 533–553 (VGVLQLHLLCLFSSGIVMSTW). The Cytoplasmic portion of the chain corresponds to 554–1036 (CWTPSSIETW…KLKMLLLPSK (483 aa)). 8 positions are modified to phosphoserine: serine 658, serine 659, serine 667, serine 670, serine 673, serine 687, serine 690, and serine 693. Disordered regions lie at residues 678–745 (HVSV…TSVE) and 870–902 (IKKSNESNSNRHSRNSARSQSKKSQKRHLKNPA). The span at 880-899 (RHSRNSARSQSKKSQKRHLK) shows a compositional bias: basic residues.

This sequence belongs to the G-protein coupled receptor Fz/Smo family. Interacts with cos. Post-translationally, phosphorylation by CkIalpha and PKA regulates smo accumulation at the cell surface and its signaling activity in response to hh. Expressed in olfactory sensory neurons (at protein level).

Its subcellular location is the cell membrane. It localises to the cell projection. The protein localises to the cilium. Its function is as follows. Segment polarity protein required for correct patterning of every segment. G protein-coupled receptor which associates with the patched protein (ptc) to transduce the hedgehog (hh) signal through the activation of an inhibitory G-protein. In the absence of hh, ptc represses the constitutive signaling activity of smo through fused (fu). Essential component of a hh-signaling pathway which regulates the Duox-dependent gut immune response to bacterial uracil; required to activate Cad99C-dependent endosome formation, norpA-dependent Ca2+ mobilization and p38 MAPK, which are essential steps in the Duox-dependent production of reactive oxygen species (ROS) in response to intestinal bacterial infection. The chain is Protein smoothened (smo) from Drosophila melanogaster (Fruit fly).